The chain runs to 240 residues: Anti-H(O) lectin (240 aa).

N4 is a glycosylation site (N-linked (GlcNAc...) asparagine). E124 and D126 together coordinate Mn(2+). Residues D126, Y128, N130, and D133 each coordinate Ca(2+). Residues D133 and H141 each coordinate Mn(2+).

Belongs to the leguminous lectin family.

Functionally, L-fucose specific lectin. The protein is Anti-H(O) lectin of Lotus tetragonolobus (Winged pea).